Reading from the N-terminus, the 276-residue chain is NH(3)-dependent NAD(+) synthetase (276 aa).

ATP is bound at residue Gly-43–Ser-50. Mg(2+) is bound at residue Asp-49. Residue Arg-146 participates in deamido-NAD(+) binding. Thr-166 lines the ATP pocket. Mg(2+) is bound at residue Glu-171. Deamido-NAD(+) is bound by residues Lys-179 and Asp-186. Positions 195 and 217 each coordinate ATP. Deamido-NAD(+) is bound at residue His-266–Lys-267.

It belongs to the NAD synthetase family. In terms of assembly, homodimer.

It catalyses the reaction deamido-NAD(+) + NH4(+) + ATP = AMP + diphosphate + NAD(+) + H(+). The protein operates within cofactor biosynthesis; NAD(+) biosynthesis; NAD(+) from deamido-NAD(+) (ammonia route): step 1/1. Its function is as follows. Catalyzes the ATP-dependent amidation of deamido-NAD to form NAD. Uses ammonia as a nitrogen source. The polypeptide is NH(3)-dependent NAD(+) synthetase (Vibrio campbellii (strain ATCC BAA-1116)).